The sequence spans 49 residues: Large ribosomal subunit protein bL33 (49 aa).

This sequence belongs to the bacterial ribosomal protein bL33 family.

In Streptococcus suis (strain 98HAH33), this protein is Large ribosomal subunit protein bL33.